A 90-amino-acid chain; its full sequence is Small ribosomal subunit protein bS20 (90 aa).

A disordered region spans residues 1–28; the sequence is MPNTSSASKRLRQNEKRRLLNRATRSNM.

It belongs to the bacterial ribosomal protein bS20 family.

Its function is as follows. Binds directly to 16S ribosomal RNA. The chain is Small ribosomal subunit protein bS20 from Rhodopirellula baltica (strain DSM 10527 / NCIMB 13988 / SH1).